Reading from the N-terminus, the 376-residue chain is WW domain-binding protein 4 (376 aa).

Residues 11–42 form a Matrin-type zinc finger; that stretch reads KFCDYCKCWIADNRPSVEFHERGKNHKENVAR. Residues 94–111 show a composition bias toward polar residues; it reads PTVSPVISTVQPTPTSNQ. 2 disordered regions span residues 94–127 and 192–324; these read PTVS…ASKG and WEKP…ECLS. Basic residues predominate over residues 114–123; that stretch reads EKKKKKKKKE. 2 WW domains span residues 123–156 and 164–197; these read EASK…KPEG and TAAK…KPED. The span at 219–272 shows a compositional bias: basic and acidic residues; it reads EDAKSSDSHSDSEGEQKKAGEASTETKKLIIKFKEKNKSTEKRIGPEIQKEKST. A phosphoserine mark is found at Ser-228 and Ser-230. The tract at residues 357 to 375 is interaction with SNRNP200; that stretch reads KKRRLENGKSRNLRQRGDD.

In terms of assembly, component of the spliceosome B complex. Associated with U2 snRNPs. Binds splicing factors SNRPB, SNRPC and SF1. Interacts via the WW domains with the Pro-rich domains of KHDRBS1/SAM68. Interacts via the WW domains with the Pro-rich domains of WBP11. Interacts with SNRNP200.

The protein resides in the nucleus. It localises to the nucleus speckle. Functionally, involved in pre-mRNA splicing as a component of the spliceosome. May play a role in cross-intron bridging of U1 and U2 snRNPs in the mammalian A complex. This is WW domain-binding protein 4 (Wbp4) from Mus musculus (Mouse).